The sequence spans 334 residues: MDRTLIQEILEIVEQAAIASATLSGKGLKDEADALAVDAMRKRMNQIQMKGRIVIGEGERDEAPMLYIGEEVGTGTGPGVDFAVDPCEGTNLCAYSQRGSMAVLAASDRGGLFNAPDFYMKKLAAPPAAKGKVDIRKSATENIKILSECLGLAPDELTIVVMDRARHKDLITEIRATGARIQPISDGDVQAAIACGFAGTGTHCLMGIGAAPEGVISAAAMRALGGHFQGQLVYDPAIAQTSEWADMTKEGNLARLAEMGITDPDKVYEASELACGEHVVFAGSGITDGLLFNGVKFETDCTRTSSLIISNLNNTCSFTNTIHMKDGAQSIALN.

Mn(2+)-binding residues include D33, E57, D85, and E88. Substrate contacts are provided by residues 88–90 (EGT), Y119, 164–166 (RAR), and 186–188 (DGD). E213 is a binding site for Mn(2+).

It belongs to the FBPase class 2 family. Homotetramer. Mn(2+) serves as cofactor.

It catalyses the reaction beta-D-fructose 1,6-bisphosphate + H2O = beta-D-fructose 6-phosphate + phosphate. The catalysed reaction is D-sedoheptulose 1,7-bisphosphate + H2O = D-sedoheptulose 7-phosphate + phosphate. It participates in carbohydrate biosynthesis; Calvin cycle. Catalyzes the hydrolysis of fructose 1,6-bisphosphate (Fru 1,6-P2) and sedoheptulose 1,7-bisphosphate (Sed 1,7-P2) to fructose 6-phosphate and sedoheptulose 7-phosphate, respectively. This Synechococcus sp. (strain CC9311) protein is D-fructose 1,6-bisphosphatase class 2/sedoheptulose 1,7-bisphosphatase.